Reading from the N-terminus, the 713-residue chain is Cytosolic endo-beta-N-acetylglucosaminidase (713 aa).

The segment at 1–36 (MIARKRKSNGSETTSGKIPKDDVSSESCLDQPADES) is disordered. The BRCT domain occupies 270 to 362 (FFDACDGFFT…DFRQNQDKFW (93 aa)).

The protein belongs to the glycosyl hydrolase 85 family.

Its subcellular location is the cytoplasm. The protein localises to the cytosol. It carries out the reaction an N(4)-(oligosaccharide-(1-&gt;3)-[oligosaccharide-(1-&gt;6)]-beta-D-Man-(1-&gt;4)-beta-D-GlcNAc-(1-&gt;4)-alpha-D-GlcNAc)-L-asparaginyl-[protein] + H2O = an oligosaccharide-(1-&gt;3)-[oligosaccharide-(1-&gt;6)]-beta-D-Man-(1-&gt;4)-D-GlcNAc + N(4)-(N-acetyl-beta-D-glucosaminyl)-L-asparaginyl-[protein]. Endoglycosidase that releases N-glycans from glycoproteins by cleaving the beta-1,4-glycosidic bond in the N,N'-diacetylchitobiose core. Involved in the processing of free oligosaccharides in the cytosol. This chain is Cytosolic endo-beta-N-acetylglucosaminidase (engase), found in Danio rerio (Zebrafish).